Reading from the N-terminus, the 510-residue chain is NAD(P)H-quinone oxidoreductase subunit 2, chloroplastic (510 aa).

A run of 13 helical transmembrane segments spans residues 24–44 (LLLFHGSFIFPECILIFGLIL), 59–79 (WFYFISSTSLVMSITALLFRW), 99–119 (IFQFLILLCSTLCIPLSVEYI), 124–144 (MAITEFLLFVLTATLGGMFLC), 149–169 (LITIFVAPECFSLCSYLLSGY), 183–203 (YLLMGGASSSILVHGFSWLYG), 229–249 (ISIALISITVGIGFKLSPAPF), 295–315 (WHLLLEILAILSMILGNLIAI), 323–343 (MLAYSSIGQIGYVIIGIIVGD), 354–374 (YMLFYISMNLGTFACIVSFGL), 395–415 (ALSLALCLLSLGGLPPLAGFF), 418–438 (LYLFWCGWQAGLYFLVSMGLL), and 484–504 (MTVCVIASTIPGISMNPILAI).

Belongs to the complex I subunit 2 family. In terms of assembly, NDH is composed of at least 16 different subunits, 5 of which are encoded in the nucleus.

Its subcellular location is the plastid. The protein localises to the chloroplast thylakoid membrane. It catalyses the reaction a plastoquinone + NADH + (n+1) H(+)(in) = a plastoquinol + NAD(+) + n H(+)(out). The enzyme catalyses a plastoquinone + NADPH + (n+1) H(+)(in) = a plastoquinol + NADP(+) + n H(+)(out). In terms of biological role, NDH shuttles electrons from NAD(P)H:plastoquinone, via FMN and iron-sulfur (Fe-S) centers, to quinones in the photosynthetic chain and possibly in a chloroplast respiratory chain. The immediate electron acceptor for the enzyme in this species is believed to be plastoquinone. Couples the redox reaction to proton translocation, and thus conserves the redox energy in a proton gradient. The chain is NAD(P)H-quinone oxidoreductase subunit 2, chloroplastic from Sisyrinchium montanum (Strict blue-eyed grass).